We begin with the raw amino-acid sequence, 223 residues long: ATP-dependent dethiobiotin synthetase BioD (223 aa).

Thr16 provides a ligand contact to Mg(2+). Residue Lys37 is part of the active site. Substrate is bound at residue Ser41. Asp50 and Glu111 together coordinate Mg(2+). ATP-binding positions include Asp50, 111–114 (EGAG), and 171–172 (NR).

This sequence belongs to the dethiobiotin synthetase family. In terms of assembly, homodimer. It depends on Mg(2+) as a cofactor.

Its subcellular location is the cytoplasm. The catalysed reaction is (7R,8S)-7,8-diammoniononanoate + CO2 + ATP = (4R,5S)-dethiobiotin + ADP + phosphate + 3 H(+). Its pathway is cofactor biosynthesis; biotin biosynthesis; biotin from 7,8-diaminononanoate: step 1/2. Its function is as follows. Catalyzes a mechanistically unusual reaction, the ATP-dependent insertion of CO2 between the N7 and N8 nitrogen atoms of 7,8-diaminopelargonic acid (DAPA, also called 7,8-diammoniononanoate) to form a ureido ring. This Anaeromyxobacter dehalogenans (strain 2CP-C) protein is ATP-dependent dethiobiotin synthetase BioD.